The primary structure comprises 367 residues: Glutamate 5-kinase 2 (367 aa).

An ATP-binding site is contributed by Lys10. 3 residues coordinate substrate: Ser50, Asp136, and Asn148. ATP is bound by residues Thr168 to Asp169 and Thr210 to Lys216. Residues Ser275–Asp353 enclose the PUA domain.

The protein belongs to the glutamate 5-kinase family.

Its subcellular location is the cytoplasm. The catalysed reaction is L-glutamate + ATP = L-glutamyl 5-phosphate + ADP. The protein operates within amino-acid biosynthesis; L-proline biosynthesis; L-glutamate 5-semialdehyde from L-glutamate: step 1/2. Functionally, catalyzes the transfer of a phosphate group to glutamate to form L-glutamate 5-phosphate. The polypeptide is Glutamate 5-kinase 2 (Pseudoalteromonas translucida (strain TAC 125)).